We begin with the raw amino-acid sequence, 682 residues long: Homeobox-leucine zipper protein HDG7 (682 aa).

The disordered stretch occupies residues 33-65 (LSDDSFDAMSGDEDKQEQRPKKKKRKTKYHRHT). The segment covering 52-65 (PKKKKRKTKYHRHT) has biased composition (basic residues). Residues 57-116 (RKTKYHRHTSYQIQELESFFKECPHPNEKQRLELGKKLTLESKQIKFWFQNRRTQMKTQL) constitute a DNA-binding region (homeobox). The stretch at 105–186 (FQNRRTQMKT…LDRICALANR (82 aa)) forms a coiled coil. The START domain maps to 214 to 429 (SGGTSLMFMD…LQRQCESFTM (216 aa)).

This sequence belongs to the HD-ZIP homeobox family. Class IV subfamily. As to quaternary structure, interacts with AIL7/PLT7. As to expression, expressed in cells around the base of leaf primordia, in the outermost 2 to 3 cell layers along the boundary between two leaf primordia. Expressed in lateral root primordia and tips, and in the epidermal boundaries of two cotyledons at heart-stage embryo.

Its subcellular location is the nucleus. Its function is as follows. Probable transcription factor that binds to the DNA sequence 5'-GCATTAAATGC-3'. Seems to promote cell differentiation. This Arabidopsis thaliana (Mouse-ear cress) protein is Homeobox-leucine zipper protein HDG7.